The chain runs to 355 residues: Small ribosomal subunit protein uS2 (355 aa).

Belongs to the universal ribosomal protein uS2 family.

The polypeptide is Small ribosomal subunit protein uS2 (Methylobacterium radiotolerans (strain ATCC 27329 / DSM 1819 / JCM 2831 / NBRC 15690 / NCIMB 10815 / 0-1)).